A 595-amino-acid polypeptide reads, in one-letter code: Elongation factor 4 (595 aa).

Residues 1–183 (MNVRNFSIIA…AIVERIPPPP (183 aa)) enclose the tr-type G domain. Residues 13–18 (DHGKST) and 130–133 (NKID) each bind GTP.

The protein belongs to the TRAFAC class translation factor GTPase superfamily. Classic translation factor GTPase family. LepA subfamily.

It localises to the cell membrane. It catalyses the reaction GTP + H2O = GDP + phosphate + H(+). In terms of biological role, required for accurate and efficient protein synthesis under certain stress conditions. May act as a fidelity factor of the translation reaction, by catalyzing a one-codon backward translocation of tRNAs on improperly translocated ribosomes. Back-translocation proceeds from a post-translocation (POST) complex to a pre-translocation (PRE) complex, thus giving elongation factor G a second chance to translocate the tRNAs correctly. Binds to ribosomes in a GTP-dependent manner. The polypeptide is Elongation factor 4 (Deinococcus geothermalis (strain DSM 11300 / CIP 105573 / AG-3a)).